A 61-amino-acid chain; its full sequence is Defensin-like peptide TXKs2 (61 aa).

The N-terminal stretch at 1–19 (MTYAILIIVSLLLISDRIS) is a signal peptide. A propeptide spanning residues 20–22 (NVV) is cleaved from the precursor. 3 disulfides stabilise this stretch: C26–C47, C33–C56, and C37–C58.

This sequence belongs to the invertebrate defensin family. Expressed by the venom gland.

It is found in the secreted. Functionally, antibacterial protein. The chain is Defensin-like peptide TXKs2 from Olivierus martensii (Manchurian scorpion).